The following is a 222-amino-acid chain: Octanoyltransferase (222 aa).

Residues 34–214 (GEKNSTVLIL…EFSKHDEALV (181 aa)) form the BPL/LPL catalytic domain. Substrate-binding positions include 72–79 (RGGKLTWH), 144–146 (AIG), and 157–159 (GVA). Residue Cys-175 is the Acyl-thioester intermediate of the active site.

It belongs to the LipB family.

It is found in the cytoplasm. It catalyses the reaction octanoyl-[ACP] + L-lysyl-[protein] = N(6)-octanoyl-L-lysyl-[protein] + holo-[ACP] + H(+). The protein operates within protein modification; protein lipoylation via endogenous pathway; protein N(6)-(lipoyl)lysine from octanoyl-[acyl-carrier-protein]: step 1/2. Catalyzes the transfer of endogenously produced octanoic acid from octanoyl-acyl-carrier-protein onto the lipoyl domains of lipoate-dependent enzymes. Lipoyl-ACP can also act as a substrate although octanoyl-ACP is likely to be the physiological substrate. This chain is Octanoyltransferase, found in Paenarthrobacter aurescens (strain TC1).